A 170-amino-acid chain; its full sequence is Ubiquitin-conjugating enzyme E2 G1 (170 aa).

Met-1 carries the N-acetylmethionine modification. An N-acetylthreonine; in Ubiquitin-conjugating enzyme E2 G1, N-terminally processed modification is found at Thr-2. A UBC core domain is found at 5 to 166; that stretch reads QSALLLRRQL…VARCVRKSQE (162 aa). Cys-90 (glycyl thioester intermediate) is an active-site residue.

It belongs to the ubiquitin-conjugating enzyme family. In terms of processing, autoubiquitinated in vitro. Widely expressed, mainly in skeletal muscle.

The enzyme catalyses S-ubiquitinyl-[E1 ubiquitin-activating enzyme]-L-cysteine + [E2 ubiquitin-conjugating enzyme]-L-cysteine = [E1 ubiquitin-activating enzyme]-L-cysteine + S-ubiquitinyl-[E2 ubiquitin-conjugating enzyme]-L-cysteine.. Its pathway is protein modification; protein ubiquitination. Accepts ubiquitin from the E1 complex and catalyzes its covalent attachment to other proteins. In vitro catalyzes 'Lys-48'-, as well as 'Lys-63'-linked polyubiquitination. May be involved in degradation of muscle-specific proteins. Mediates polyubiquitination of CYP3A4. In Homo sapiens (Human), this protein is Ubiquitin-conjugating enzyme E2 G1 (UBE2G1).